The chain runs to 1174 residues: Lysylphosphatidylglycerol biosynthesis bifunctional protein LysX (1174 aa).

Residues 1–665 form a phosphatidylglycerol lysyltransferase region; the sequence is MGVGLHLTVP…LLHHDGSAPD (665 aa). The tract at residues 9–36 is disordered; sequence VPGLRRDGRGVQSNSHDTSSKTTADISR. Polar residues predominate over residues 19-33; sequence VQSNSHDTSSKTTAD. 7 consecutive transmembrane segments (helical) span residues 82–102, 124–144, 148–168, 179–199, 216–236, 274–294, and 614–634; these read VPAA…LASV, FPDT…ALTA, IAWL…AAEI, FGEN…VLGY, AVWL…VELF, AIFG…LFLS, and VIPR…LPFS. The tract at residues 666 to 1174 is lysine--tRNA ligase; it reads VSGLRQVGLT…TLPFPLAKPH (509 aa). Positions 728–806 form a DNA-binding region, OB; it reads VSVSGRIMRI…SLIVSGWRLI (79 aa). The Mg(2+) site is built by Asp1086 and Glu1093.

In the N-terminal section; belongs to the LPG synthetase family. This sequence in the C-terminal section; belongs to the class-II aminoacyl-tRNA synthetase family. Requires Mg(2+) as cofactor.

Its subcellular location is the cell membrane. It carries out the reaction tRNA(Lys) + L-lysine + ATP = L-lysyl-tRNA(Lys) + AMP + diphosphate. The catalysed reaction is L-lysyl-tRNA(Lys) + a 1,2-diacyl-sn-glycero-3-phospho-(1'-sn-glycerol) = a 1,2-diacyl-sn-glycero-3-phospho-1'-(3'-O-L-lysyl)-sn-glycerol + tRNA(Lys). In terms of biological role, catalyzes the production of L-lysyl-tRNA(Lys)transfer and the transfer of a lysyl group from L-lysyl-tRNA(Lys) to membrane-bound phosphatidylglycerol (PG), which produces lysylphosphatidylglycerol (LPG), one of the components of the bacterial membrane with a positive net charge. LPG synthesis contributes to the resistance to cationic antimicrobial peptides (CAMPs) and likely protects M.tuberculosis against the CAMPs produced by competiting microorganisms (bacteriocins). In fact, the modification of anionic phosphatidylglycerol with positively charged L-lysine results in repulsion of the peptides. This Mycobacterium tuberculosis (strain KZN 1435 / MDR) protein is Lysylphosphatidylglycerol biosynthesis bifunctional protein LysX (lysX).